Here is a 343-residue protein sequence, read N- to C-terminus: Probable dual-specificity RNA methyltransferase RlmN (343 aa).

The active-site Proton acceptor is the E91. The Radical SAM core domain occupies 97-326 (HPDRITACIS…AEIRREKGTD (230 aa)). Cysteines 104 and 331 form a disulfide. The [4Fe-4S] cluster site is built by C111, C115, and C118. S-adenosyl-L-methionine is bound by residues 158-159 (GE), S190, 213-215 (SLH), and N289. C331 acts as the S-methylcysteine intermediate in catalysis.

Belongs to the radical SAM superfamily. RlmN family. It depends on [4Fe-4S] cluster as a cofactor.

It localises to the cytoplasm. It catalyses the reaction adenosine(2503) in 23S rRNA + 2 reduced [2Fe-2S]-[ferredoxin] + 2 S-adenosyl-L-methionine = 2-methyladenosine(2503) in 23S rRNA + 5'-deoxyadenosine + L-methionine + 2 oxidized [2Fe-2S]-[ferredoxin] + S-adenosyl-L-homocysteine. The catalysed reaction is adenosine(37) in tRNA + 2 reduced [2Fe-2S]-[ferredoxin] + 2 S-adenosyl-L-methionine = 2-methyladenosine(37) in tRNA + 5'-deoxyadenosine + L-methionine + 2 oxidized [2Fe-2S]-[ferredoxin] + S-adenosyl-L-homocysteine. Its function is as follows. Specifically methylates position 2 of adenine 2503 in 23S rRNA and position 2 of adenine 37 in tRNAs. The protein is Probable dual-specificity RNA methyltransferase RlmN of Thermotoga maritima (strain ATCC 43589 / DSM 3109 / JCM 10099 / NBRC 100826 / MSB8).